Here is a 317-residue protein sequence, read N- to C-terminus: Beta-ketoacyl-[acyl-carrier-protein] synthase III (317 aa).

Active-site residues include C112 and H244. Residues 245–249 (QANVR) form an ACP-binding region. N274 is a catalytic residue.

The protein belongs to the thiolase-like superfamily. FabH family. Homodimer.

It is found in the cytoplasm. The catalysed reaction is malonyl-[ACP] + acetyl-CoA + H(+) = 3-oxobutanoyl-[ACP] + CO2 + CoA. It functions in the pathway lipid metabolism; fatty acid biosynthesis. In terms of biological role, catalyzes the condensation reaction of fatty acid synthesis by the addition to an acyl acceptor of two carbons from malonyl-ACP. Catalyzes the first condensation reaction which initiates fatty acid synthesis and may therefore play a role in governing the total rate of fatty acid production. Possesses both acetoacetyl-ACP synthase and acetyl transacylase activities. Its substrate specificity determines the biosynthesis of branched-chain and/or straight-chain of fatty acids. The chain is Beta-ketoacyl-[acyl-carrier-protein] synthase III from Rickettsia canadensis (strain McKiel).